The following is a 342-amino-acid chain: Farnesyl pyrophosphate synthase 2 (342 aa).

Isopentenyl diphosphate-binding residues include Lys-47, Arg-50, and Gln-86. Mg(2+) is bound by residues Asp-93 and Asp-97. Arg-102 is a binding site for dimethylallyl diphosphate. Position 103 (Arg-103) interacts with isopentenyl diphosphate. Dimethylallyl diphosphate-binding residues include Lys-190, Thr-191, Gln-229, Lys-246, and Lys-255.

It belongs to the FPP/GGPP synthase family. Mg(2+) serves as cofactor.

Its subcellular location is the cytoplasm. The enzyme catalyses isopentenyl diphosphate + dimethylallyl diphosphate = (2E)-geranyl diphosphate + diphosphate. It catalyses the reaction isopentenyl diphosphate + (2E)-geranyl diphosphate = (2E,6E)-farnesyl diphosphate + diphosphate. It participates in isoprenoid biosynthesis; farnesyl diphosphate biosynthesis; farnesyl diphosphate from geranyl diphosphate and isopentenyl diphosphate: step 1/1. It functions in the pathway isoprenoid biosynthesis; geranyl diphosphate biosynthesis; geranyl diphosphate from dimethylallyl diphosphate and isopentenyl diphosphate: step 1/1. Catalyzes the sequential condensation of isopentenyl pyrophosphate with the allylic pyrophosphates, dimethylallyl pyrophosphate, and then with the resultant geranylpyrophosphate to the ultimate product farnesyl pyrophosphate. This chain is Farnesyl pyrophosphate synthase 2 (FPS2), found in Arabidopsis thaliana (Mouse-ear cress).